The following is a 334-amino-acid chain: Formamidase (334 aa).

Residues 14–260 (MLMGLVQYPV…WEIVTAEVFP (247 aa)) form the CN hydrolase domain. Glu60 (proton acceptor) is an active-site residue. Catalysis depends on Lys133, which acts as the Proton donor. The active-site Nucleophile is Cys166.

The protein belongs to the carbon-nitrogen hydrolase superfamily. Aliphatic amidase family.

The catalysed reaction is formamide + H2O = formate + NH4(+). In terms of biological role, is an aliphatic amidase with a restricted substrate specificity, as it only hydrolyzes formamide. This is Formamidase from Nitratidesulfovibrio vulgaris (strain DP4) (Desulfovibrio vulgaris).